The following is a 566-amino-acid chain: Urease subunit alpha (566 aa).

The 439-residue stretch at 128-566 folds into the Urease domain; that stretch reads GGIDTHIHFI…LPMAQRYFLF (439 aa). Ni(2+) contacts are provided by H133, H135, and K216. K216 is modified (N6-carboxylysine). H218 lines the substrate pocket. 2 residues coordinate Ni(2+): H245 and H271. The Proton donor role is filled by H319. D359 serves as a coordination point for Ni(2+).

Belongs to the metallo-dependent hydrolases superfamily. Urease alpha subunit family. In terms of assembly, heterotrimer of UreA (gamma), UreB (beta) and UreC (alpha) subunits. Three heterotrimers associate to form the active enzyme. The cofactor is Ni cation. Carboxylation allows a single lysine to coordinate two nickel ions.

The protein resides in the cytoplasm. The enzyme catalyses urea + 2 H2O + H(+) = hydrogencarbonate + 2 NH4(+). It functions in the pathway nitrogen metabolism; urea degradation; CO(2) and NH(3) from urea (urease route): step 1/1. In Pseudomonas fluorescens (strain Pf0-1), this protein is Urease subunit alpha.